Reading from the N-terminus, the 429-residue chain is MTSVVVVGTQWGDEGKGKITDFLSQKADAIARFAGGDNAGHTIKIDGETYKLHLIPSGIFYKEKTSVIGNGLVVNPKSLVTELKGLQERGINTDNLRISNRAHVILPYHIKQDIADEESRGDNKIGTTCKGIGPCYQDKVARIGIRMADLLDKDIFEEKLRHNLAIKNKLFEKFYEVEGLTFEEIFEEYYGYGQEIAKYVTDTSKILNDVLDEGGKVLFEGAQGILLDVDQGTYPYVTSSNPVAGGVAIGAGVGPSRVTSVIGVSKAYTSRVGDGPFPTELFDEVGQQIREVGREYGTTTGRPRRVGWFDTVVVRHSRRVSGITHLALNSIDVLSGLETVKICTAYNYKGETITEYPANLHIIEQCEPIYEELPGWSEDVTACRTLEELPENARRYVERVSELTGIQIATFSVGPAREQTNVLVDVWEA.

GTP is bound by residues 12 to 18 (GDEGKGK) and 40 to 42 (GHT). Asp-13 (proton acceptor) is an active-site residue. The Mg(2+) site is built by Asp-13 and Gly-40. IMP is bound by residues 13–16 (DEGK), 38–41 (NAGH), Thr-128, Arg-142, Gln-223, Thr-238, and Arg-302. The active-site Proton donor is His-41. Residue 298–304 (TTTGRPR) coordinates substrate. GTP contacts are provided by residues Arg-304, 330 to 332 (SID), and 412 to 414 (SVG).

It belongs to the adenylosuccinate synthetase family. As to quaternary structure, homodimer. The cofactor is Mg(2+).

It is found in the cytoplasm. The enzyme catalyses IMP + L-aspartate + GTP = N(6)-(1,2-dicarboxyethyl)-AMP + GDP + phosphate + 2 H(+). It functions in the pathway purine metabolism; AMP biosynthesis via de novo pathway; AMP from IMP: step 1/2. Plays an important role in the de novo pathway of purine nucleotide biosynthesis. Catalyzes the first committed step in the biosynthesis of AMP from IMP. The sequence is that of Adenylosuccinate synthetase from Lysinibacillus sphaericus (strain C3-41).